The sequence spans 667 residues: Fatty acyl-CoA synthetase A (667 aa).

It belongs to the ATP-dependent AMP-binding enzyme family.

It localises to the endosome membrane. The enzyme catalyses a long-chain fatty acid + ATP + CoA = a long-chain fatty acyl-CoA + AMP + diphosphate. Functionally, long chain fatty acid acyl-CoA synthetases catalyze the formation of a thiester bond between a free fatty acid and coenzyme A during fatty acid metabolic process. May mediate fatty acid retrieval from the lumen of endosomes into the cytoplasm. This Dictyostelium discoideum (Social amoeba) protein is Fatty acyl-CoA synthetase A (fcsA).